A 484-amino-acid chain; its full sequence is Chromosomal replication initiator protein DnaA (484 aa).

Residues 1-83 form a domain I, interacts with DnaA modulators region; the sequence is MQPPSQDWAS…LAWRTVWPGI (83 aa). The domain II stretch occupies residues 83 to 146; the sequence is IAEVKVSVRN…EKKAEGEDQN (64 aa). The disordered stretch occupies residues 110 to 146; sequence GDQPRPLPKKPAKKKQSVPATPKSTSPEKKAEGEDQN. The segment covering 116-125 has biased composition (basic residues); the sequence is LPKKPAKKKQ. Over residues 135-146 the composition is skewed to basic and acidic residues; sequence SPEKKAEGEDQN. A domain III, AAA+ region region spans residues 147 to 364; the sequence is QFEERYNFDN…GALNRVVAYA (218 aa). Residues Gly191, Gly193, Lys194, and Thr195 each coordinate ATP. The tract at residues 365–484 is domain IV, binds dsDNA; that stretch reads TLSNRPINMD…VRLLMRQFEG (120 aa).

It belongs to the DnaA family. In terms of assembly, oligomerizes as a right-handed, spiral filament on DNA at oriC.

The protein resides in the cytoplasm. Functionally, plays an essential role in the initiation and regulation of chromosomal replication. ATP-DnaA binds to the origin of replication (oriC) to initiate formation of the DNA replication initiation complex once per cell cycle. Binds the DnaA box (a 9 base pair repeat at the origin) and separates the double-stranded (ds)DNA. Forms a right-handed helical filament on oriC DNA; dsDNA binds to the exterior of the filament while single-stranded (ss)DNA is stabiized in the filament's interior. The ATP-DnaA-oriC complex binds and stabilizes one strand of the AT-rich DNA unwinding element (DUE), permitting loading of DNA polymerase. After initiation quickly degrades to an ADP-DnaA complex that is not apt for DNA replication. Binds acidic phospholipids. The sequence is that of Chromosomal replication initiator protein DnaA from Zymomonas mobilis subsp. mobilis (strain ATCC 31821 / ZM4 / CP4).